Here is a 387-residue protein sequence, read N- to C-terminus: 3-ketoacyl-CoA thiolase (387 aa).

C91 serves as the catalytic Acyl-thioester intermediate. Residues H343 and C373 each act as proton acceptor in the active site.

It belongs to the thiolase-like superfamily. Thiolase family. Heterotetramer of two alpha chains (FadB) and two beta chains (FadA).

It localises to the cytoplasm. It carries out the reaction an acyl-CoA + acetyl-CoA = a 3-oxoacyl-CoA + CoA. The protein operates within lipid metabolism; fatty acid beta-oxidation. Functionally, catalyzes the final step of fatty acid oxidation in which acetyl-CoA is released and the CoA ester of a fatty acid two carbons shorter is formed. This is 3-ketoacyl-CoA thiolase from Shewanella frigidimarina (strain NCIMB 400).